Consider the following 225-residue polypeptide: Agamous-like MADS-box protein TM6 (225 aa).

Positions methionine 1–threonine 61 constitute an MADS-box domain. Residues tyrosine 84–aspartate 174 enclose the K-box domain.

As to expression, expressed during flower development in stamens, petals and carpels. Expressed in fruits and seeds.

The protein resides in the nucleus. Functionally, probable transcription factor involved in flower development. In Vitis vinifera (Grape), this protein is Agamous-like MADS-box protein TM6.